We begin with the raw amino-acid sequence, 224 residues long: Envelope glycoprotein L (224 aa).

The N-terminal stretch at 1-19 (MGILGWVGLIAVGVLCVRG) is a signal peptide. Residues 20–161 (GLPSTEYVIR…FDYSRTRRCV (142 aa)) are interaction with gH. The 179-residue stretch at 23 to 201 (STEYVIRSRV…LTTPPPIIAT (179 aa)) folds into the gL alphaherpesvirus-type domain. Intrachain disulfides connect Cys-44–Cys-76 and Cys-149–Cys-160. Residues 161–224 (VGRQDLGPTN…RRRRPHSRRL (64 aa)) form a disordered region. Positions 213-224 (KSRRRRPHSRRL) are enriched in basic residues.

Belongs to the herpesviridae glycoprotein L (gL) family. Alphaherpesvirinae gL subfamily. As to quaternary structure, interacts with glycoprotein H (gH); this interaction is necessary for the correct processing and cell surface expression of gH. The heterodimer gH/gL seems to interact with gB trimers during fusion.

It localises to the virion membrane. The protein localises to the host cell membrane. Its subcellular location is the host Golgi apparatus. It is found in the host trans-Golgi network. Functionally, the heterodimer glycoprotein H-glycoprotein L is required for the fusion of viral and plasma membranes leading to virus entry into the host cell. Acts as a functional inhibitor of gH and maintains gH in an inhibited form. Upon binding to host integrins, gL dissociates from gH leading to activation of the viral fusion glycoproteins gB and gH. This Human herpesvirus 1 (strain 17) (HHV-1) protein is Envelope glycoprotein L.